Reading from the N-terminus, the 78-residue chain is ATP synthase subunit c (78 aa).

The next 2 helical transmembrane spans lie at 11-31 (FIGA…VGHV) and 53-73 (LFVG…IALL).

This sequence belongs to the ATPase C chain family. F-type ATPases have 2 components, F(1) - the catalytic core - and F(0) - the membrane proton channel. F(1) has five subunits: alpha(3), beta(3), gamma(1), delta(1), epsilon(1). F(0) has four main subunits: a(1), b(1), b'(1) and c(10-14). The alpha and beta chains form an alternating ring which encloses part of the gamma chain. F(1) is attached to F(0) by a central stalk formed by the gamma and epsilon chains, while a peripheral stalk is formed by the delta, b and b' chains.

Its subcellular location is the cell inner membrane. Its function is as follows. F(1)F(0) ATP synthase produces ATP from ADP in the presence of a proton or sodium gradient. F-type ATPases consist of two structural domains, F(1) containing the extramembraneous catalytic core and F(0) containing the membrane proton channel, linked together by a central stalk and a peripheral stalk. During catalysis, ATP synthesis in the catalytic domain of F(1) is coupled via a rotary mechanism of the central stalk subunits to proton translocation. Functionally, key component of the F(0) channel; it plays a direct role in translocation across the membrane. A homomeric c-ring of between 10-14 subunits forms the central stalk rotor element with the F(1) delta and epsilon subunits. The chain is ATP synthase subunit c from Cereibacter sphaeroides (strain ATCC 17025 / ATH 2.4.3) (Rhodobacter sphaeroides).